The sequence spans 405 residues: Formate-dependent phosphoribosylglycinamide formyltransferase (405 aa).

N(1)-(5-phospho-beta-D-ribosyl)glycinamide is bound by residues 27 to 28 (EL) and Glu-87. Residues Arg-120, Lys-162, 167 to 172 (SSGKGQ), 202 to 205 (EGFI), and Glu-210 contribute to the ATP site. The 196-residue stretch at 125 to 320 (RLAAETLGLP…EFELHARALL (196 aa)) folds into the ATP-grasp domain. Glu-279 and Glu-291 together coordinate Mg(2+). N(1)-(5-phospho-beta-D-ribosyl)glycinamide contacts are provided by residues Asp-298, Lys-367, and 374–375 (RR).

This sequence belongs to the PurK/PurT family. As to quaternary structure, homodimer.

It carries out the reaction N(1)-(5-phospho-beta-D-ribosyl)glycinamide + formate + ATP = N(2)-formyl-N(1)-(5-phospho-beta-D-ribosyl)glycinamide + ADP + phosphate + H(+). It participates in purine metabolism; IMP biosynthesis via de novo pathway; N(2)-formyl-N(1)-(5-phospho-D-ribosyl)glycinamide from N(1)-(5-phospho-D-ribosyl)glycinamide (formate route): step 1/1. In terms of biological role, involved in the de novo purine biosynthesis. Catalyzes the transfer of formate to 5-phospho-ribosyl-glycinamide (GAR), producing 5-phospho-ribosyl-N-formylglycinamide (FGAR). Formate is provided by PurU via hydrolysis of 10-formyl-tetrahydrofolate. The polypeptide is Formate-dependent phosphoribosylglycinamide formyltransferase (Bordetella avium (strain 197N)).